The chain runs to 120 residues: MSAQEIIRSIEAEQLKSNLPEIYIGDTVRVGVKIKEGDKYRVQPYEGVVIARRNGGINETITVRRVFQGVGVERVFLLHSPRIDNIKVLRRGKVRRAKLYYLRGRVGKATRIKQRFDRSL.

The protein belongs to the bacterial ribosomal protein bL19 family.

Functionally, this protein is located at the 30S-50S ribosomal subunit interface and may play a role in the structure and function of the aminoacyl-tRNA binding site. This Trichormus variabilis (strain ATCC 29413 / PCC 7937) (Anabaena variabilis) protein is Large ribosomal subunit protein bL19.